A 543-amino-acid chain; its full sequence is Glucose-6-phosphate isomerase (543 aa).

Catalysis depends on glutamate 353, which acts as the Proton donor. Catalysis depends on residues histidine 384 and lysine 504.

It belongs to the GPI family.

It is found in the cytoplasm. The catalysed reaction is alpha-D-glucose 6-phosphate = beta-D-fructose 6-phosphate. It participates in carbohydrate biosynthesis; gluconeogenesis. It functions in the pathway carbohydrate degradation; glycolysis; D-glyceraldehyde 3-phosphate and glycerone phosphate from D-glucose: step 2/4. In terms of biological role, catalyzes the reversible isomerization of glucose-6-phosphate to fructose-6-phosphate. The polypeptide is Glucose-6-phosphate isomerase (Roseiflexus castenholzii (strain DSM 13941 / HLO8)).